Here is a 98-residue protein sequence, read N- to C-terminus: Citrate lyase acyl carrier protein (98 aa).

Ser-14 carries the O-(phosphoribosyl dephospho-coenzyme A)serine modification.

The protein belongs to the CitD family. Oligomer with a subunit composition of (alpha,beta,gamma)6.

It localises to the cytoplasm. Functionally, covalent carrier of the coenzyme of citrate lyase. The polypeptide is Citrate lyase acyl carrier protein (Vibrio cholerae serotype O1 (strain ATCC 39541 / Classical Ogawa 395 / O395)).